Here is a 105-residue protein sequence, read N- to C-terminus: Large ribosomal subunit protein uL24 (105 aa).

The protein belongs to the universal ribosomal protein uL24 family. Part of the 50S ribosomal subunit.

In terms of biological role, one of two assembly initiator proteins, it binds directly to the 5'-end of the 23S rRNA, where it nucleates assembly of the 50S subunit. Functionally, one of the proteins that surrounds the polypeptide exit tunnel on the outside of the subunit. The sequence is that of Large ribosomal subunit protein uL24 from Xanthobacter autotrophicus (strain ATCC BAA-1158 / Py2).